Here is a 56-residue protein sequence, read N- to C-terminus: Large ribosomal subunit protein bL33 (56 aa).

This sequence belongs to the bacterial ribosomal protein bL33 family.

The polypeptide is Large ribosomal subunit protein bL33 (Marinomonas sp. (strain MWYL1)).